Consider the following 230-residue polypeptide: UPF0502 protein Oter_3715 (230 aa).

This sequence belongs to the UPF0502 family.

The polypeptide is UPF0502 protein Oter_3715 (Opitutus terrae (strain DSM 11246 / JCM 15787 / PB90-1)).